The primary structure comprises 757 residues: Xaa-Pro dipeptidyl-peptidase (757 aa).

Residues Ser348, Asp468, and His498 each act as charge relay system in the active site.

Belongs to the peptidase S15 family. As to quaternary structure, homodimer.

It localises to the cytoplasm. The enzyme catalyses Hydrolyzes Xaa-Pro-|- bonds to release unblocked, N-terminal dipeptides from substrates including Ala-Pro-|-p-nitroanilide and (sequentially) Tyr-Pro-|-Phe-Pro-|-Gly-Pro-|-Ile.. In terms of biological role, removes N-terminal dipeptides sequentially from polypeptides having unsubstituted N-termini provided that the penultimate residue is proline. In Streptococcus pneumoniae (strain ATCC 700669 / Spain 23F-1), this protein is Xaa-Pro dipeptidyl-peptidase.